A 473-amino-acid polypeptide reads, in one-letter code: ATP-dependent 6-phosphofructokinase 1 (473 aa).

At serine 71 the chain carries Phosphoserine. ATP-binding positions include glycine 102, 165–166 (RG), and 190–193 (GDGS). Aspartate 191 contacts Mg(2+). Substrate contacts are provided by residues 219–221 (TID), 264–266 (MGR), glutamate 320, and 376–379 (YMIR). The Proton acceptor role is filled by aspartate 221.

The protein belongs to the phosphofructokinase type A (PFKA) family. PPi-dependent PFK group II subfamily. Atypical ATP-dependent clade 'X' sub-subfamily. Homotetramer. The cofactor is Mg(2+). In terms of tissue distribution, expressed in roots, leaves, stems and flowers.

The protein resides in the cytoplasm. The catalysed reaction is beta-D-fructose 6-phosphate + ATP = beta-D-fructose 1,6-bisphosphate + ADP + H(+). The protein operates within carbohydrate degradation; glycolysis; D-glyceraldehyde 3-phosphate and glycerone phosphate from D-glucose: step 3/4. Its activity is regulated as follows. Allosterically activated by AMP. Its function is as follows. Catalyzes the phosphorylation of D-fructose 6-phosphate to fructose 1,6-bisphosphate by ATP, the first committing step of glycolysis. In Arabidopsis thaliana (Mouse-ear cress), this protein is ATP-dependent 6-phosphofructokinase 1.